The following is a 539-amino-acid chain: Chitin deacetylase 1 (539 aa).

Residues 1–23 (MARYARVATLAACLLFACALADG) form the signal peptide. Residues 42–104 (QELCKDKDAG…WKDAVKNCKL (63 aa)) form the Chitin-binding type-2 domain. Intrachain disulfides connect C80-C93, C122-C134, C129-C147, C141-C156, C168-C180, and C173-C178. The LDL-receptor class A domain maps to 121 to 157 (LCQDGFLACGDSTCIERGLFCNGEKDCGDGSDENSCD). Zn(2+) is bound at residue D206. Cystine bridges form between C230–C489, C354–C361, C391–C397, C497–C520, and C503–C523. The N-linked (GlcNAc...) asparagine glycan is linked to N244. Zn(2+) contacts are provided by H261 and H265. N296 is a glycosylation site (N-linked (GlcNAc...) asparagine).

This sequence belongs to the carbohydrate esterase 4 (CE4) family. Interacts with CPAP3-A1. The cofactor is Zn(2+). Highly expressed in epidermis and head. Moderate expression levels in fat body, Malpighian tubule, testis and midgut. Low expression in silk gland and ovary.

Its subcellular location is the secreted. The catalysed reaction is [(1-&gt;4)-N-acetyl-beta-D-glucosaminyl](n) + n H2O = chitosan + n acetate. Binding to the accessory protein CPAP3-A1 is essential for chitinase activity. Hydrolyzes the N-acetamido groups of N-acetyl-D-glucosamine residues in chitin. The chain is Chitin deacetylase 1 from Bombyx mori (Silk moth).